Reading from the N-terminus, the 822-residue chain is Calpain-3 (822 aa).

A disordered region spans residues 1 to 36 (MPTVISASVAPRTGAEPMSPGPIAQAAQDKGTEAGG). In terms of domain architecture, Calpain catalytic spans 74–418 (LFVDPEFPPD…FTKLEICNLT (345 aa)). Catalysis depends on residues Cys-129, His-335, and Asn-359. Positions 419–587 (ADALESDKLQ…KRNLSEEVEN (169 aa)) are domain III. The interval 588–650 (TISVDRPVKK…EPGNTDQESE (63 aa)) is linker. Residues 604-652 (IFVSDRANSNKELGVDQETEEGKDNTSPDKQAKSPQLEPGNTDQESEEQ) form a disordered region. A compositionally biased stretch (basic and acidic residues) spans 623–635 (EEGKDNTSPDKQA). 4 consecutive EF-hand domains span residues 650–684 (EEQRQFRNIFRQIAGDDMEICADELKNVLNRVVNK), 693–726 (FTLESCRSMIALMDTDGSGRLNLQEFHHLWKKIK), 723–758 (KKIKTWQKIFKHYDTDQSGTINSYEMRNAVKDAGFH), and 788–822 (VRLEGMFRAFNAFDKDGDGIIKLNVLEWLQLTMYA). A domain IV region spans residues 651-822 (EQRQFRNIFR…LEWLQLTMYA (172 aa)). The Ca(2+) site is built by Ala-663, Asp-666, Glu-668, Glu-673, Asp-706, Asp-708, Ser-710, Arg-712, Glu-717, Asp-736, Asp-738, Ser-740, Thr-742, Glu-747, Asp-801, Asp-803, Asp-805, and Ile-807.

This sequence belongs to the peptidase C2 family. In terms of assembly, homodimer; via EF-hand domain 4. Interacts with TTN/titin. Interacts with CMYA5; this interaction, which results in CMYA5 proteolysis, may protect CAPN3 from autolysis. Interacts with SIMC1. Interacts with UTP25; the interaction is required for CAPN3 translocation to the nucleolus. In terms of tissue distribution, skeletal muscle.

The protein localises to the cytoplasm. Its subcellular location is the nucleus. It localises to the nucleolus. The catalysed reaction is Broad endopeptidase activity.. Activated by micromolar concentrations of calcium and inhibited by calpastatin. Calcium-regulated non-lysosomal thiol-protease. Proteolytically cleaves CTBP1. Mediates, with UTP25, the proteasome-independent degradation of p53/TP53. This Bos taurus (Bovine) protein is Calpain-3 (CAPN3).